Here is a 128-residue protein sequence, read N- to C-terminus: MENVPNVYFNPVFIEPTFKHSLLSVYKHRLIVLFEVFVVFILIYVFFRSELNMFFMPKRKIPDPIDRLRRANLACEDDKLMIYGLPWMTTQTSALSINSKPIVYKDCAKLLRSINGSQPVSLNDVLRR.

The Intravirion portion of the chain corresponds to 1-30 (MENVPNVYFNPVFIEPTFKHSLLSVYKHRL). Residues 31–51 (IVLFEVFVVFILIYVFFRSEL) form a helical; Signal-anchor for type III membrane protein membrane-spanning segment. Over 52–107 (NMFFMPKRKIPDPIDRLRRANLACEDDKLMIYGLPWMTTQTSALSINSKPIVYKDC) the chain is Virion surface. Cys75 and Cys107 form a disulfide bridge.

It belongs to the orthopoxvirus OPG099 family. Interacts with OPG086. Component of the entry fusion complex (EFC) composed of OPG053, OPG076, OPG086, OPG094, OPG095, OPG099, OPG107, OPG143, OPG104J5, OPG147 and OPG155. Except for OPG095 and OPG053, each of the EFC proteins is required for assembly or stability of the complex. In terms of processing, most cysteines are linked by disulfide bonds. They are created by the viral disulfide bond formation pathway, a poxvirus-specific redox pathway that operates on the cytoplasmic side of the MV membranes. Unglycosylated because produced in viral factories instead of the classic ER -Golgi route.

The protein resides in the virion membrane. Functionally, component of the entry fusion complex (EFC), which consists of 11 proteins. During cell infection, this complex mediates entry of the virion core into the host cytoplasm by a two-step mechanism consisting of lipid mixing of the viral and cellular membranes and subsequent pore formation. The sequence is that of Entry-fusion complex protein OPG094 (OPG099) from Vaccinia virus (strain Copenhagen) (VACV).